The sequence spans 457 residues: tRNA-2-methylthio-N(6)-dimethylallyladenosine synthase (457 aa).

Positions 3-120 (KKVYVKTFGC…LPQMIDARRE (118 aa)) constitute an MTTase N-terminal domain. Cys-12, Cys-49, Cys-83, Cys-157, Cys-161, and Cys-164 together coordinate [4Fe-4S] cluster. The Radical SAM core domain occupies 143-377 (RVEGPSAFVS…QATIEENVAR (235 aa)). A TRAM domain is found at 380 to 447 (QSMVGKVERI…PHSLRGELVL (68 aa)).

The protein belongs to the methylthiotransferase family. MiaB subfamily. As to quaternary structure, monomer. Requires [4Fe-4S] cluster as cofactor.

Its subcellular location is the cytoplasm. The catalysed reaction is N(6)-dimethylallyladenosine(37) in tRNA + (sulfur carrier)-SH + AH2 + 2 S-adenosyl-L-methionine = 2-methylsulfanyl-N(6)-dimethylallyladenosine(37) in tRNA + (sulfur carrier)-H + 5'-deoxyadenosine + L-methionine + A + S-adenosyl-L-homocysteine + 2 H(+). Its function is as follows. Catalyzes the methylthiolation of N6-(dimethylallyl)adenosine (i(6)A), leading to the formation of 2-methylthio-N6-(dimethylallyl)adenosine (ms(2)i(6)A) at position 37 in tRNAs that read codons beginning with uridine. The protein is tRNA-2-methylthio-N(6)-dimethylallyladenosine synthase of Burkholderia lata (strain ATCC 17760 / DSM 23089 / LMG 22485 / NCIMB 9086 / R18194 / 383).